The primary structure comprises 445 residues: Trimethylamine monooxygenase (445 aa).

FAD contacts are provided by Ser-14, Glu-39, Gln-41, Leu-47, Trp-48, and His-64. Positions 72 and 74 each coordinate NADP(+). 2 residues coordinate FAD: Asn-74 and Val-127. NADP(+) is bound by residues Thr-204, Ser-205, Ser-207, and Arg-228. 2 residues coordinate FAD: Gln-317 and Thr-320. Arg-411 is a binding site for NADP(+).

It belongs to the FMO family. FAD serves as cofactor.

It carries out the reaction trimethylamine + NADPH + O2 = trimethylamine N-oxide + NADP(+) + H2O. In terms of biological role, catalyzes the oxidation of trimethylamine (TMA) to produce trimethylamine N-oxide (TMAO). In vitro, has a broad substrate specificity, oxidizing many nitrogen- and sulfur-containing compounds, including dimethylamine (DMA), dimethylsulfide (DMS) and dimethylsulfoxide (DMSO). The chain is Trimethylamine monooxygenase from Roseovarius sp. (strain 217).